Here is a 489-residue protein sequence, read N- to C-terminus: Betaine aldehyde dehydrogenase (489 aa).

T26 and D93 together coordinate K(+). Position 150-152 (G150–W152) interacts with NAD(+). The Charge relay system role is filled by K162. K176 to E179 provides a ligand contact to NAD(+). V180 lines the K(+) pocket. NAD(+) is bound at residue G229 to T232. L245 contacts K(+). Catalysis depends on E251, which acts as the Proton acceptor. NAD(+) contacts are provided by G253, C285, and E386. C285 functions as the Nucleophile in the catalytic mechanism. At C285 the chain carries Cysteine sulfenic acid (-SOH). K(+)-binding residues include K456 and G459. Residue E463 is the Charge relay system of the active site.

It belongs to the aldehyde dehydrogenase family. As to quaternary structure, dimer of dimers. K(+) is required as a cofactor.

It carries out the reaction betaine aldehyde + NAD(+) + H2O = glycine betaine + NADH + 2 H(+). It functions in the pathway amine and polyamine biosynthesis; betaine biosynthesis via choline pathway; betaine from betaine aldehyde: step 1/1. Its function is as follows. Involved in the biosynthesis of the osmoprotectant glycine betaine. Catalyzes the irreversible oxidation of betaine aldehyde to the corresponding acid. The chain is Betaine aldehyde dehydrogenase from Burkholderia cenocepacia (strain ATCC BAA-245 / DSM 16553 / LMG 16656 / NCTC 13227 / J2315 / CF5610) (Burkholderia cepacia (strain J2315)).